Consider the following 827-residue polypeptide: Striatin homolog (827 aa).

A coiled-coil region spans residues 37–109; sequence RAHWISEKAE…VEEEEEEDDK (73 aa). 4 disordered regions span residues 99–123, 181–270, 311–362, and 400–459; these read KVEE…SKDN, KDIN…QLQS, SSVS…DEQS, and EEGN…SELM. Over residues 109–123 the composition is skewed to basic and acidic residues; that stretch reads KIPKNREPPKKSKDN. 2 stretches are compositionally biased toward low complexity: residues 184–270 and 311–334; these read NNNN…QLQS and SSVS…TSKQ. Positions 337–346 are enriched in polar residues; the sequence is EDPNNVTISK. 3 stretches are compositionally biased toward low complexity: residues 347–356, 416–432, and 439–453; these read QQQQEQQQQQ, TPTT…STGS, and SSSS…NSNT. WD repeat units lie at residues 495–534, 548–593, 610–649, 709–748, 751–790, and 797–827; these read SHFD…PTKK, GHTG…IDSY, GHQD…QLYT, NNNS…VVHS, AHSN…CIQD, and KYDE…RILN.

Belongs to the WD repeat striatin family. In terms of assembly, part of the core of STRIPAK complexes.

The protein resides in the cytoplasm. It is found in the membrane. Its function is as follows. Calmodulin-binding scaffolding protein which is the center of the striatin-interacting phosphatase and kinase (STRIPAK) complexes. STRIPAK complexes have critical roles in protein (de)phosphorylation and are regulators of multiple signaling pathways including Hippo, MAPK, nuclear receptor and cytoskeleton remodeling. Different types of STRIPAK complexes are involved in a variety of biological processes such as cell growth, differentiation, apoptosis, metabolism and immune regulation. This Dictyostelium discoideum (Social amoeba) protein is Striatin homolog (strn).